Reading from the N-terminus, the 797-residue chain is MKLNQFARLTPDFKVQVAELKQIGLQADPDDAFSQSATDLFNAFFPEAYTLAAKEDKLAQVAVNMDQTLAAWLAKKPSKMTRRDFYNVALQLLGFEAFTDFDLNDPFKMMTATKLPSLDHDLTSTADLLKAVYLLLNTRTKHLVSYLDDLANRGFLKDFQKKQKKPTHLLFNGKVQQVFDARQAVREVVWIESDMDTDHDGQRDLLEATIYRPKATDQGLKVPVLFTANPYFHGTNDVTAVTHVPETTLAVKTHGASKAEVTANPEEPANLPHHPVNGEATQAEAYAEENSMYAFNDYFLARGFAVVYSAGVGTRYSDGFRTTGGPEETDGAVAVIEWLTGKRRAFTNRTDGITIKAWWSTGLVAMTGKSYLATLAMAAATTGVDGLKTIVADAGISSWYDYYRENGLVVAPGGFQGEDADVLAVDTFSRQKSGGDLINIKQAWEKHLATITHDQDRTTGAYNTWWDARNYRKNANKVKADVVLIHGLNDWNVKPTNAIKFWEAIADLPIQKKLVLHQGQHVYVHNVRSLDFLDMMNLWLTHELLGEANGAEDVLPNVVVQDNVAVQTWSAYQNFASPAAEHVTNTRNLKTDFEAATDQFTDHATATFNAQHDTSASFETAIITPNSAYANSRLWLTQPPLERDQTLEGIPHLELTLAIDAPTGILSVRLIDLGMAKRFGETAATVALNGLQLGFDYKTTDILEFKPTAKPTPSKLISLGHINLQNPKNAYEVQRITPGQPFHISLDLQPTHYHLPAGRQLALVIHGADMAQTIRPIKTTHYQIDLANSSITLPYRI.

Catalysis depends on charge relay system residues Ser370, Asp490, and His521.

Belongs to the peptidase S15 family. Homodimer.

Its subcellular location is the cytoplasm. It catalyses the reaction Hydrolyzes Xaa-Pro-|- bonds to release unblocked, N-terminal dipeptides from substrates including Ala-Pro-|-p-nitroanilide and (sequentially) Tyr-Pro-|-Phe-Pro-|-Gly-Pro-|-Ile.. Functionally, removes N-terminal dipeptides sequentially from polypeptides having unsubstituted N-termini provided that the penultimate residue is proline. In Lacticaseibacillus casei (strain BL23) (Lactobacillus casei), this protein is Xaa-Pro dipeptidyl-peptidase.